The following is a 278-amino-acid chain: tRNA (guanine-N(7)-)-methyltransferase (278 aa).

Residues glycine 63, 86–87, 119–120, and leucine 139 contribute to the S-adenosyl-L-methionine site; these read EL and NA. Aspartate 142 is an active-site residue. 217 to 219 serves as a coordination point for S-adenosyl-L-methionine; sequence TEE. A disordered region spans residues 259 to 278; that stretch reads IDSTTTTTTSTATITEVESK. Positions 261–278 are enriched in low complexity; sequence STTTTTTSTATITEVESK.

Belongs to the class I-like SAM-binding methyltransferase superfamily. TrmB family.

It localises to the nucleus. The enzyme catalyses guanosine(46) in tRNA + S-adenosyl-L-methionine = N(7)-methylguanosine(46) in tRNA + S-adenosyl-L-homocysteine. It participates in tRNA modification; N(7)-methylguanine-tRNA biosynthesis. Catalyzes the formation of N(7)-methylguanine at position 46 (m7G46) in tRNA. In Dictyostelium discoideum (Social amoeba), this protein is tRNA (guanine-N(7)-)-methyltransferase (mettl1).